A 488-amino-acid polypeptide reads, in one-letter code: UDP-N-acetylmuramate--L-alanine ligase (488 aa).

Position 127–133 (127–133 (GTHGKTT)) interacts with ATP.

Belongs to the MurCDEF family.

It is found in the cytoplasm. The enzyme catalyses UDP-N-acetyl-alpha-D-muramate + L-alanine + ATP = UDP-N-acetyl-alpha-D-muramoyl-L-alanine + ADP + phosphate + H(+). The protein operates within cell wall biogenesis; peptidoglycan biosynthesis. In terms of biological role, cell wall formation. The polypeptide is UDP-N-acetylmuramate--L-alanine ligase (Shewanella sp. (strain MR-4)).